Consider the following 199-residue polypeptide: Molybdenum cofactor guanylyltransferase (199 aa).

Residues 12-14 (LAG), Lys25, Asn53, Asp71, and Asp101 contribute to the GTP site. Residue Asp101 participates in Mg(2+) binding.

The protein belongs to the MobA family. As to quaternary structure, monomer. Mg(2+) is required as a cofactor.

Its subcellular location is the cytoplasm. The enzyme catalyses Mo-molybdopterin + GTP + H(+) = Mo-molybdopterin guanine dinucleotide + diphosphate. Its function is as follows. Transfers a GMP moiety from GTP to Mo-molybdopterin (Mo-MPT) cofactor (Moco or molybdenum cofactor) to form Mo-molybdopterin guanine dinucleotide (Mo-MGD) cofactor. In Cupriavidus pinatubonensis (strain JMP 134 / LMG 1197) (Cupriavidus necator (strain JMP 134)), this protein is Molybdenum cofactor guanylyltransferase.